The chain runs to 471 residues: MFNLNFFNYTCHCEWCFWVLPSYNGLGLTPQMGWDNWNTFACNVSEDLLLNTADRISDIGLKDLGYKYVILDDCWSSGRDEDGFLVADEQKFPNGMGHVADRLHNNSFLFGMYSSAGEYTCAGYPGSLGREEEDAQFFANNRVDYLKYDNCYNKGRFGTPESSHKRYKAMSDALNKTGRPIFYSLCNWGQDLTFYWGSDIANSWRMSGDITAEFSRPDSRCPCDGDEYDCKYAGYHCSIMNILNKAAPMGQNGGIGGWNDLDNLEVGVGNLTDDEEKTHFSMWAMVKSPLIIGADVNHLKASSYSIYSQSSVIAINQDPKGIPATRVWRYYVPQTDKYGQGEIQFWSGPLENGDQVIALLNGGMKARPMNATLEDIFFDSYQGSEELSTSWDIYDLWANRIDNATASAILENNKVTNNTLYNATKLSYKEGLLNGDSRLFGTKVGTISPDGIINTTVPAHGIALYRLRSSS.

An N-terminal signal peptide occupies residues 1 to 18; that stretch reads MFNLNFFNYTCHCEWCFW. Residues cysteine 42 and cysteine 74 are joined by a disulfide bond. Asparagine 43 is a glycosylation site (N-linked (GlcNAc...) asparagine). Substrate-binding residues include aspartate 72 and aspartate 73. Residue asparagine 105 is glycosylated (N-linked (GlcNAc...) asparagine). Cysteine 121 and cysteine 151 are disulfide-bonded. Lysine 147 contacts substrate. Residue aspartate 149 is the Nucleophile of the active site. Asparagine 175 is a glycosylation site (N-linked (GlcNAc...) asparagine). Residue arginine 205 coordinates substrate. Aspartate 209 serves as the catalytic Proton donor. 2 disulfide bridges follow: cysteine 221-cysteine 237 and cysteine 223-cysteine 230. Glutamine 251 contributes to the substrate binding site. N-linked (GlcNAc...) asparagine glycosylation is found at asparagine 270, asparagine 370, asparagine 403, asparagine 417, asparagine 422, and asparagine 454.

It belongs to the glycosyl hydrolase 27 family. In terms of assembly, homotetramer.

The protein resides in the secreted. The catalysed reaction is Hydrolysis of terminal, non-reducing alpha-D-galactose residues in alpha-D-galactosides, including galactose oligosaccharides, galactomannans and galactolipids.. The protein is Alpha-galactosidase (MEL) of Saccharomyces paradoxus (Yeast).